The following is a 130-amino-acid chain: MSKRTEQLGHEIQRILGEILQYELKDPRVGFATVVGVEVTADLQIARVRISVMGTPEERKETMAALERAKGFLRRRLAEELNYLRFVPELRLILDTSVDYSLHIDELLRRAAAERAGSPPPQPEDDKPAE.

It belongs to the RbfA family. As to quaternary structure, monomer. Binds 30S ribosomal subunits, but not 50S ribosomal subunits or 70S ribosomes.

It localises to the cytoplasm. In terms of biological role, one of several proteins that assist in the late maturation steps of the functional core of the 30S ribosomal subunit. Associates with free 30S ribosomal subunits (but not with 30S subunits that are part of 70S ribosomes or polysomes). Required for efficient processing of 16S rRNA. May interact with the 5'-terminal helix region of 16S rRNA. The polypeptide is Ribosome-binding factor A (Roseiflexus castenholzii (strain DSM 13941 / HLO8)).